A 560-amino-acid chain; its full sequence is Oxygen-dependent choline dehydrogenase (560 aa).

6 to 35 (DYIIVGAGSAGCVLADRLSESGDHSVLLLE) contributes to the FAD binding site. H470 acts as the Proton acceptor in catalysis.

Belongs to the GMC oxidoreductase family. It depends on FAD as a cofactor.

The enzyme catalyses choline + A = betaine aldehyde + AH2. It carries out the reaction betaine aldehyde + NAD(+) + H2O = glycine betaine + NADH + 2 H(+). Its pathway is amine and polyamine biosynthesis; betaine biosynthesis via choline pathway; betaine aldehyde from choline (cytochrome c reductase route): step 1/1. Functionally, involved in the biosynthesis of the osmoprotectant glycine betaine. Catalyzes the oxidation of choline to betaine aldehyde and betaine aldehyde to glycine betaine at the same rate. The polypeptide is Oxygen-dependent choline dehydrogenase (Vibrio vulnificus (strain YJ016)).